Reading from the N-terminus, the 193-residue chain is Adenine phosphoribosyltransferase (193 aa).

The protein belongs to the purine/pyrimidine phosphoribosyltransferase family. Homodimer.

It localises to the cytoplasm. It carries out the reaction AMP + diphosphate = 5-phospho-alpha-D-ribose 1-diphosphate + adenine. It participates in purine metabolism; AMP biosynthesis via salvage pathway; AMP from adenine: step 1/1. Catalyzes a salvage reaction resulting in the formation of AMP, that is energically less costly than de novo synthesis. The chain is Adenine phosphoribosyltransferase from Bifidobacterium animalis subsp. lactis (strain AD011).